Consider the following 129-residue polypeptide: Glyoxalase domain-containing protein 5 homolog (129 aa).

Residues 5–128 enclose the VOC domain; that stretch reads RLDHLVLTVS…DYNLIEISNY (124 aa).

This sequence belongs to the glyoxalase I family.

In Dictyostelium discoideum (Social amoeba), this protein is Glyoxalase domain-containing protein 5 homolog (glod5).